A 412-amino-acid polypeptide reads, in one-letter code: Proline-rich protein 30 (412 aa).

Polar residues-rich tracts occupy residues 1-15 and 23-39; these read MLPQNKDQVLPQTSV and GFSQLVDSSPHNLQPLS. Disordered stretches follow at residues 1 to 88, 123 to 174, and 317 to 412; these read MLPQ…HPYS, PLTP…SNRQ, and RPKE…KSSV. Composition is skewed to low complexity over residues 50-59, 126-142, and 334-350; these read PFSSTQSRRP, PSFSPSQPQNSSLPHSP, and QLPASQPPAAQARADPV. Over residues 353 to 372 the composition is skewed to polar residues; sequence TPSQTRSFRSAGLQSPNSPR.

This is Proline-rich protein 30 (PRR30) from Homo sapiens (Human).